A 347-amino-acid polypeptide reads, in one-letter code: UPF0284 protein M1627_0030 (347 aa).

It belongs to the UPF0284 family.

The protein is UPF0284 protein M1627_0030 of Saccharolobus islandicus (strain M.16.27) (Sulfolobus islandicus).